The primary structure comprises 237 residues: Uracil-DNA glycosylase (237 aa).

Asp-77 serves as the catalytic Proton acceptor.

The protein belongs to the uracil-DNA glycosylase (UDG) superfamily. UNG family.

The protein resides in the cytoplasm. It carries out the reaction Hydrolyzes single-stranded DNA or mismatched double-stranded DNA and polynucleotides, releasing free uracil.. Excises uracil residues from the DNA which can arise as a result of misincorporation of dUMP residues by DNA polymerase or due to deamination of cytosine. This is Uracil-DNA glycosylase from Acinetobacter baumannii (strain SDF).